Consider the following 175-residue polypeptide: RNA pyrophosphohydrolase (175 aa).

The 144-residue stretch at 6-149 (GYRPNVGIVI…KRDVYRRVMK (144 aa)) folds into the Nudix hydrolase domain. The Nudix box signature appears at 38-59 (GGINPGETPEQAMYRELFEEVG).

Belongs to the Nudix hydrolase family. RppH subfamily. A divalent metal cation is required as a cofactor.

Functionally, accelerates the degradation of transcripts by removing pyrophosphate from the 5'-end of triphosphorylated RNA, leading to a more labile monophosphorylated state that can stimulate subsequent ribonuclease cleavage. This is RNA pyrophosphohydrolase from Yersinia enterocolitica serotype O:8 / biotype 1B (strain NCTC 13174 / 8081).